Here is a 100-residue protein sequence, read N- to C-terminus: NADH-quinone oxidoreductase subunit K (100 aa).

A run of 3 helical transmembrane segments spans residues 4 to 24, 28 to 48, and 60 to 80; these read LQHGLILAAILFVLGLTGLLI, LLFMLISLEVMINAAALAFVV, and VMYILAITLAAAEASIGLALL.

This sequence belongs to the complex I subunit 4L family. As to quaternary structure, NDH-1 is composed of 13 different subunits. Subunits NuoA, H, J, K, L, M, N constitute the membrane sector of the complex.

The protein localises to the cell inner membrane. The catalysed reaction is a quinone + NADH + 5 H(+)(in) = a quinol + NAD(+) + 4 H(+)(out). NDH-1 shuttles electrons from NADH, via FMN and iron-sulfur (Fe-S) centers, to quinones in the respiratory chain. The immediate electron acceptor for the enzyme in this species is believed to be ubiquinone. Couples the redox reaction to proton translocation (for every two electrons transferred, four hydrogen ions are translocated across the cytoplasmic membrane), and thus conserves the redox energy in a proton gradient. This is NADH-quinone oxidoreductase subunit K from Yersinia pseudotuberculosis serotype O:1b (strain IP 31758).